A 209-amino-acid polypeptide reads, in one-letter code: ATP-dependent Clp protease proteolytic subunit (209 aa).

Ser111 serves as the catalytic Nucleophile. His136 is a catalytic residue.

Belongs to the peptidase S14 family. As to quaternary structure, fourteen ClpP subunits assemble into 2 heptameric rings which stack back to back to give a disk-like structure with a central cavity, resembling the structure of eukaryotic proteasomes.

It is found in the cytoplasm. The enzyme catalyses Hydrolysis of proteins to small peptides in the presence of ATP and magnesium. alpha-casein is the usual test substrate. In the absence of ATP, only oligopeptides shorter than five residues are hydrolyzed (such as succinyl-Leu-Tyr-|-NHMec, and Leu-Tyr-Leu-|-Tyr-Trp, in which cleavage of the -Tyr-|-Leu- and -Tyr-|-Trp bonds also occurs).. In terms of biological role, cleaves peptides in various proteins in a process that requires ATP hydrolysis. Has a chymotrypsin-like activity. Plays a major role in the degradation of misfolded proteins. The sequence is that of ATP-dependent Clp protease proteolytic subunit from Dechloromonas aromatica (strain RCB).